Consider the following 120-residue polypeptide: Succinate dehydrogenase membrane anchor subunit (120 aa).

Residues 1-17 (MTEKLLHFIRTKSGSMH) are Mitochondrial matrix-facing. Residues 18-38 (WWLQRFLAILLAPIILYLLFD) traverse the membrane as a helical segment. The Mitochondrial intermembrane portion of the chain corresponds to 39–63 (VAIYIGQQSDPTVMMFLNRIFNHNS). A helical membrane pass occupies residues 64–85 (IFIFITSVILIWHVRGGMEVII). H76 contacts heme. Over 86–95 (EDYVHGEKTR) the chain is Mitochondrial matrix. Y88 is an a ubiquinone binding site. A helical transmembrane segment spans residues 96 to 120 (IVSIFLIRVIAIEIMEYLYKCSIIF).

As to quaternary structure, part of an enzyme complex containing four subunits: a flavoprotein, an iron-sulfur protein, plus two membrane-anchoring proteins. The cofactor is heme.

Its subcellular location is the mitochondrion inner membrane. It functions in the pathway carbohydrate metabolism; tricarboxylic acid cycle. Membrane-anchoring subunit of succinate dehydrogenase (SDH). This is Succinate dehydrogenase membrane anchor subunit (SDH4) from Reclinomonas americana.